The primary structure comprises 128 residues: MSFTGKYQLESQEGFVEFMKAVGLPDDMIEKGKDIKSVSEIEENGNQFKVTVTTGSKVLTNSFTIGQEADIETLTGERVKTIVNREGNKLKVVLNRITSITELVDANTLVNTLTLGGLVYKRISKRVA.

This sequence belongs to the calycin superfamily. Fatty-acid binding protein (FABP) family. Expressed in the yolk syncytial layer (YSL) and subsequently in the intestinal bulb in developing embryos and larvae. In adults, expressed in the intestine.

The protein resides in the cytoplasm. In terms of biological role, binds free fatty acids and their coenzyme A derivatives, bilirubin, and some other small molecules in the cytoplasm. May be involved in intracellular lipid transport. This chain is Fatty acid binding protein 1-B.1 (fabp1b.1), found in Danio rerio (Zebrafish).